The following is a 182-amino-acid chain: Orotate phosphoribosyltransferase (182 aa).

5-phospho-alpha-D-ribose 1-diphosphate-binding positions include Arg-91, Lys-92, Lys-95, His-97, and 117-125 (EDVTTTGGS). Positions 121 and 149 each coordinate orotate.

The protein belongs to the purine/pyrimidine phosphoribosyltransferase family. PyrE subfamily. Homodimer. Mg(2+) serves as cofactor.

The enzyme catalyses orotidine 5'-phosphate + diphosphate = orotate + 5-phospho-alpha-D-ribose 1-diphosphate. It functions in the pathway pyrimidine metabolism; UMP biosynthesis via de novo pathway; UMP from orotate: step 1/2. Functionally, catalyzes the transfer of a ribosyl phosphate group from 5-phosphoribose 1-diphosphate to orotate, leading to the formation of orotidine monophosphate (OMP). The polypeptide is Orotate phosphoribosyltransferase (Pyrococcus furiosus (strain ATCC 43587 / DSM 3638 / JCM 8422 / Vc1)).